A 213-amino-acid polypeptide reads, in one-letter code: GTP-binding protein YPTC4 (213 aa).

Position 13-21 (13-21 (GDTGVGKSC)) interacts with GTP. The Effector region signature appears at 35–43 (HDLTIGVEF). Residues 61 to 65 (DTAGQ), 119 to 122 (NKCD), and 149 to 151 (SAR) contribute to the GTP site. The segment at 194–213 (AGPQTVKPGEGGAAKSSSCC) is disordered. Residues Cys212 and Cys213 are each lipidated (S-geranylgeranyl cysteine).

The protein belongs to the small GTPase superfamily. Rab family.

The protein resides in the cell membrane. Functionally, protein transport. Probably involved in vesicular traffic. The protein is GTP-binding protein YPTC4 (YPTC4) of Chlamydomonas reinhardtii (Chlamydomonas smithii).